Here is a 309-residue protein sequence, read N- to C-terminus: Probable manganese-dependent inorganic pyrophosphatase (309 aa).

Mn(2+)-binding residues include H9, D13, D15, D75, H97, and D149.

This sequence belongs to the PPase class C family. Mn(2+) serves as cofactor.

It localises to the cytoplasm. It catalyses the reaction diphosphate + H2O = 2 phosphate + H(+). The chain is Probable manganese-dependent inorganic pyrophosphatase from Staphylococcus epidermidis (strain ATCC 12228 / FDA PCI 1200).